The following is a 285-amino-acid chain: 2-dehydro-3-deoxyphosphooctonate aldolase (285 aa).

This sequence belongs to the KdsA family.

Its subcellular location is the cytoplasm. The catalysed reaction is D-arabinose 5-phosphate + phosphoenolpyruvate + H2O = 3-deoxy-alpha-D-manno-2-octulosonate-8-phosphate + phosphate. It participates in carbohydrate biosynthesis; 3-deoxy-D-manno-octulosonate biosynthesis; 3-deoxy-D-manno-octulosonate from D-ribulose 5-phosphate: step 2/3. The protein operates within bacterial outer membrane biogenesis; lipopolysaccharide biosynthesis. This is 2-dehydro-3-deoxyphosphooctonate aldolase from Acinetobacter baylyi (strain ATCC 33305 / BD413 / ADP1).